The following is a 396-amino-acid chain: THAP domain-containing protein 5 (396 aa).

A THAP-type zinc finger spans residues 2–85 (MPRYCAAICC…LKQTAVPTIF (84 aa)). The tract at residues 86–113 (SLPEDNQGKDPSKKKSQKKNLEDEKEVC) is disordered. Positions 91–113 (NQGKDPSKKKSQKKNLEDEKEVC) are enriched in basic and acidic residues. The HCFC1-binding motif (HBM) motif lies at 322-325 (EHSY). Residues 349 to 382 (LELKEQQTLGRLKSLEALVRQLKQENWLSEENVK) adopt a coiled-coil conformation.

As to quaternary structure, interacts with HTRA2; under apoptotic conditions. Interacts with ABRAXAS2. Cleaved by HTRA2 during apoptosis.

It is found in the nucleus. Its function is as follows. Has sequence-specific DNA-binding activity and can function as transcriptional repressor (in vitro). May be a regulator of cell cycle: THAP5 overexpression in human cell lines causes cell cycle arrest at G2/M phase. The sequence is that of THAP domain-containing protein 5 (THAP5) from Macaca fascicularis (Crab-eating macaque).